Consider the following 261-residue polypeptide: tRNA pseudouridine synthase A (261 aa).

The active-site Nucleophile is the D51. Y109 serves as a coordination point for substrate.

It belongs to the tRNA pseudouridine synthase TruA family. In terms of assembly, homodimer.

The enzyme catalyses uridine(38/39/40) in tRNA = pseudouridine(38/39/40) in tRNA. Formation of pseudouridine at positions 38, 39 and 40 in the anticodon stem and loop of transfer RNAs. This Psychromonas ingrahamii (strain DSM 17664 / CCUG 51855 / 37) protein is tRNA pseudouridine synthase A.